The sequence spans 486 residues: Malonate-semialdehyde dehydrogenase 1 (486 aa).

Residues Phe-154, Lys-178, Glu-181, Arg-182, and Ser-231 each contribute to the NAD(+) site. Catalysis depends on Cys-286, which acts as the Nucleophile. Glu-386 is a binding site for NAD(+).

The protein belongs to the aldehyde dehydrogenase family. IolA subfamily. As to quaternary structure, homotetramer.

It carries out the reaction 3-oxopropanoate + NAD(+) + CoA + H2O = hydrogencarbonate + acetyl-CoA + NADH + H(+). It catalyses the reaction 2-methyl-3-oxopropanoate + NAD(+) + CoA + H2O = propanoyl-CoA + hydrogencarbonate + NADH + H(+). The protein operates within polyol metabolism; myo-inositol degradation into acetyl-CoA; acetyl-CoA from myo-inositol: step 7/7. Its function is as follows. Catalyzes the oxidation of malonate semialdehyde (MSA) and methylmalonate semialdehyde (MMSA) into acetyl-CoA and propanoyl-CoA, respectively. Is involved in a myo-inositol catabolic pathway. Bicarbonate, and not CO2, is the end-product of the enzymatic reaction. The sequence is that of Malonate-semialdehyde dehydrogenase 1 from Bacillus anthracis.